Here is a 465-residue protein sequence, read N- to C-terminus: Na(+)-translocating NADH-quinone reductase subunit A (465 aa).

Belongs to the NqrA family. In terms of assembly, composed of six subunits; NqrA, NqrB, NqrC, NqrD, NqrE and NqrF.

The catalysed reaction is a ubiquinone + n Na(+)(in) + NADH + H(+) = a ubiquinol + n Na(+)(out) + NAD(+). Its function is as follows. NQR complex catalyzes the reduction of ubiquinone-1 to ubiquinol by two successive reactions, coupled with the transport of Na(+) ions from the cytoplasm to the periplasm. NqrA to NqrE are probably involved in the second step, the conversion of ubisemiquinone to ubiquinol. The sequence is that of Na(+)-translocating NADH-quinone reductase subunit A from Chlamydia trachomatis serovar L2 (strain ATCC VR-902B / DSM 19102 / 434/Bu).